The primary structure comprises 400 residues: MAIHKIRAFFNLEASGGIVLALAAIAAMIIANTSLNTWYESFIHAPVAIQIGSFSIAKDAHHWINDGLMAVFFFLVGLELKREVLIGELSNVKQIILPAGAALGGMIMPAIVYLFFNYNEPEFWRGWAIPAATDIAFALGILSLLGNRVPNSLKVFLVSIAIFDDIGAIIIIALFYTNDLSLGSLAIAGLCLPFLYLLNRRNVTSITPYLLIGVIMWVAVLKSGIHATLAGVVLALFIPLFDRTDPEHSPLEELEHDLQNTVSYGILPLFAFANAGISLKGAGFGELFHSVPLGIAAGLFIGKQVGVMLMCWLIFKLGISTMPKGMNFKQIYGAALLCGVGFTMSLFIGGLAFAGETPLFDERLGIIMGSIVSGIAGYMMLKATLKDEVNVTSVDLTRHS.

The next 11 membrane-spanning stretches (helical) occupy residues 10-30 (FNLEASGGIVLALAAIAAMII), 60-80 (AHHWINDGLMAVFFFLVGLEL), 95-115 (IILPAGAALGGMIMPAIVYLF), 126-146 (GWAIPAATDIAFALGILSLLG), 155-175 (VFLVSIAIFDDIGAIIIIALF), 178-198 (NDLSLGSLAIAGLCLPFLYLL), 218-238 (VAVLKSGIHATLAGVVLALFI), 265-285 (GILPLFAFANAGISLKGAGFG), 295-315 (IAAGLFIGKQVGVMLMCWLIF), 334-354 (AALLCGVGFTMSLFIGGLAFA), and 364-384 (LGIIMGSIVSGIAGYMMLKAT).

It belongs to the NhaA Na(+)/H(+) (TC 2.A.33) antiporter family.

The protein resides in the cell inner membrane. The enzyme catalyses Na(+)(in) + 2 H(+)(out) = Na(+)(out) + 2 H(+)(in). In terms of biological role, na(+)/H(+) antiporter that extrudes sodium in exchange for external protons. The sequence is that of Na(+)/H(+) antiporter NhaA from Psychrobacter cryohalolentis (strain ATCC BAA-1226 / DSM 17306 / VKM B-2378 / K5).